The following is a 1615-amino-acid chain: Ferredoxin-dependent glutamate synthase, chloroplastic (1615 aa).

The transit peptide at 1-52 (MATLPRAAAAAAPSPAAALLPLPRAAPLLAGRAAARSAARRLRARGTRAPPL) directs the protein to the chloroplast. The active-site Nucleophile is cysteine 97. Residues 97–496 (CGVGFVANLK…PGMMITVDLQ (400 aa)) form the Glutamine amidotransferase type-2 domain. 1175 to 1232 (LSETHQTLIQNGLRERVVLRVDGGFRSGLDVLMAAAMGADEYGFGSVAMIATGCVMAR) lines the FMN pocket. [3Fe-4S] cluster-binding residues include cysteine 1228, cysteine 1234, and cysteine 1239.

It belongs to the glutamate synthase family. It depends on [3Fe-4S] cluster as a cofactor. Requires FAD as cofactor. FMN is required as a cofactor. As to expression, expressed in leaf blades and at lower levels in roots.

It localises to the plastid. The protein localises to the chloroplast. It carries out the reaction 2 oxidized [2Fe-2S]-[ferredoxin] + 2 L-glutamate = L-glutamine + 2 reduced [2Fe-2S]-[ferredoxin] + 2-oxoglutarate + 2 H(+). The protein operates within amino-acid biosynthesis; L-glutamate biosynthesis via GLT pathway; L-glutamate from 2-oxoglutarate and L-glutamine (ferredoxin route): step 1/1. It functions in the pathway energy metabolism; nitrogen metabolism. In terms of biological role, involved in glutamate biosynthesis in leaf. Required for the reassimilation of ammonium ions generated during photorespiration. This chain is Ferredoxin-dependent glutamate synthase, chloroplastic (GLU), found in Oryza sativa subsp. japonica (Rice).